Consider the following 943-residue polypeptide: Conidiophore development regulator abaA (943 aa).

Disordered stretches follow at residues 1 to 69 (MSSS…FNGG) and 111 to 133 (TSRQHHHVPPPLPQVPTRYHQRG). A compositionally biased stretch (basic and acidic residues) spans 29 to 43 (IDTRRSFHGDSRLPL). Positions 59–68 (PSSAHSSFNG) are enriched in polar residues. Positions 161–254 (QKDKGGVWRR…QVVKKFFEDL (94 aa)) form a DNA-binding region, TEA. The span at 537-555 (EHQRKKEKRSCGKKPDLER) shows a compositional bias: basic and acidic residues. 2 disordered regions span residues 537 to 575 (EHQRKKEKRSCGKKPDLERSASSSKRKRSEDEGDAAAWT) and 809 to 901 (GAAG…HHPG). A compositionally biased stretch (low complexity) spans 865–889 (DSWTAGSSAGGAPAATPTGPDWGPT).

The protein belongs to the TEC1 family.

It localises to the nucleus. BrlA, abaA and wetA are pivotal regulators of conidiophore development and conidium maturation. They act individually and together to regulate their own expression and that of numerous other sporulation-specific genes. Binds to the sequence 5'-CATTCY-3', where Y is a pyrimidine, making both major- and minor-groove contacts. The sequence is that of Conidiophore development regulator abaA from Hapsidospora chrysogena (Acremonium chrysogenum).